We begin with the raw amino-acid sequence, 293 residues long: Elongation factor Ts (293 aa).

The interval 80 to 83 is involved in Mg(2+) ion dislocation from EF-Tu; it reads TDFV.

It belongs to the EF-Ts family.

The protein localises to the cytoplasm. Its function is as follows. Associates with the EF-Tu.GDP complex and induces the exchange of GDP to GTP. It remains bound to the aminoacyl-tRNA.EF-Tu.GTP complex up to the GTP hydrolysis stage on the ribosome. The protein is Elongation factor Ts of Burkholderia pseudomallei (strain 1106a).